The following is a 289-amino-acid chain: Formamidopyrimidine-DNA glycosylase (289 aa).

Pro-2 acts as the Schiff-base intermediate with DNA in catalysis. The active-site Proton donor is the Glu-3. The active-site Proton donor; for beta-elimination activity is Lys-61. DNA-binding residues include His-96, Arg-115, and Lys-161. The segment at 247–281 (SAYGQEDRPCPRCGTAIRREKFMNRSSFSCPKCQR) adopts an FPG-type zinc-finger fold. Arg-271 functions as the Proton donor; for delta-elimination activity in the catalytic mechanism.

This sequence belongs to the FPG family. In terms of assembly, monomer. Requires Zn(2+) as cofactor.

The enzyme catalyses Hydrolysis of DNA containing ring-opened 7-methylguanine residues, releasing 2,6-diamino-4-hydroxy-5-(N-methyl)formamidopyrimidine.. The catalysed reaction is 2'-deoxyribonucleotide-(2'-deoxyribose 5'-phosphate)-2'-deoxyribonucleotide-DNA = a 3'-end 2'-deoxyribonucleotide-(2,3-dehydro-2,3-deoxyribose 5'-phosphate)-DNA + a 5'-end 5'-phospho-2'-deoxyribonucleoside-DNA + H(+). Its function is as follows. Involved in base excision repair of DNA damaged by oxidation or by mutagenic agents. Acts as a DNA glycosylase that recognizes and removes damaged bases. Has a preference for oxidized purines, such as 7,8-dihydro-8-oxoguanine (8-oxoG). Has AP (apurinic/apyrimidinic) lyase activity and introduces nicks in the DNA strand. Cleaves the DNA backbone by beta-delta elimination to generate a single-strand break at the site of the removed base with both 3'- and 5'-phosphates. The protein is Formamidopyrimidine-DNA glycosylase of Rhodococcus opacus (strain B4).